The chain runs to 104 residues: Membrane magnesium transporter (104 aa).

Residues 1 to 2 lie on the Cytoplasmic side of the membrane; the sequence is MN. The helical transmembrane segment at 3–23 threads the bilayer; sequence LGFLVGVFGVLILSHAAYSTI. Over 24 to 40 the chain is Lumenal; it reads QYRGLLKIMEEEFSRPP. Residues 41-61 traverse the membrane as a helical segment; the sequence is INVILELIIGLALCMWAALTF. The Cytoplasmic segment spans residues 62-104; the sequence is PGKFLSIHPDSDENRAVFLPDNSDFMIFNHRGRLFPPQIDMKF.

The protein belongs to the membrane magnesium transporter (TC 1.A.67) family. As to quaternary structure, component of the ER membrane protein complex (EMC).

The protein resides in the endoplasmic reticulum membrane. The protein localises to the golgi apparatus membrane. It is found in the early endosome membrane. In terms of biological role, mediates Mg(2+) transport. The sequence is that of Membrane magnesium transporter from Arabidopsis thaliana (Mouse-ear cress).